The sequence spans 522 residues: Protein nucleotidyltransferase YdiU (522 aa).

Residues glycine 101, glycine 103, arginine 104, lysine 123, aspartate 135, glycine 136, arginine 193, and arginine 200 each contribute to the ATP site. Catalysis depends on aspartate 270, which acts as the Proton acceptor. 2 residues coordinate Mg(2+): asparagine 271 and aspartate 280. Aspartate 280 contacts ATP.

It belongs to the SELO family. Mg(2+) serves as cofactor. The cofactor is Mn(2+).

The catalysed reaction is L-seryl-[protein] + ATP = 3-O-(5'-adenylyl)-L-seryl-[protein] + diphosphate. It carries out the reaction L-threonyl-[protein] + ATP = 3-O-(5'-adenylyl)-L-threonyl-[protein] + diphosphate. It catalyses the reaction L-tyrosyl-[protein] + ATP = O-(5'-adenylyl)-L-tyrosyl-[protein] + diphosphate. The enzyme catalyses L-histidyl-[protein] + UTP = N(tele)-(5'-uridylyl)-L-histidyl-[protein] + diphosphate. The catalysed reaction is L-seryl-[protein] + UTP = O-(5'-uridylyl)-L-seryl-[protein] + diphosphate. It carries out the reaction L-tyrosyl-[protein] + UTP = O-(5'-uridylyl)-L-tyrosyl-[protein] + diphosphate. Its function is as follows. Nucleotidyltransferase involved in the post-translational modification of proteins. It can catalyze the addition of adenosine monophosphate (AMP) or uridine monophosphate (UMP) to a protein, resulting in modifications known as AMPylation and UMPylation. The chain is Protein nucleotidyltransferase YdiU from Flavobacterium johnsoniae (strain ATCC 17061 / DSM 2064 / JCM 8514 / BCRC 14874 / CCUG 350202 / NBRC 14942 / NCIMB 11054 / UW101) (Cytophaga johnsonae).